The primary structure comprises 166 residues: Lymphocyte antigen 6G6e (166 aa).

The signal sequence occupies residues 1 to 18 (MGPSSAFLGVLFLSGTLG). The UPAR/Ly6 domain maps to 28–151 (LRCYTCSFAK…PPPNLPLMTL (124 aa)). 4 disulfide bridges follow: Cys30/Cys52, Cys33/Cys39, Cys110/Cys129, and Cys130/Cys135.

In terms of assembly, interacts with CHRNA4. Post-translationally, O-glycosylated. Contains sialic acid residues.

It localises to the cell surface. The protein localises to the cell membrane. The protein resides in the cell projection. Its function is as follows. Believed to act as a modulator of nicotinic acetylcholine receptors (nAChRs) activity. In vitro potentiates alpha-3:beta-4-containing nAChRs maximum response by increasing peak current and slowing down receptor desensitization; the activity is dependent on its cell surface localization. The protein is Lymphocyte antigen 6G6e (Ly6g6e) of Mus musculus (Mouse).